The primary structure comprises 894 residues: Histone-lysine N-methyltransferase EZ2 (894 aa).

A compositionally biased stretch (low complexity) spans 1 to 11; that stretch reads MASSSKASDSS. 3 disordered regions span residues 1 to 25, 395 to 447, and 491 to 513; these read MASS…GKDA, SSVS…KRQK, and KKTS…VGRQ. The segment covering 395-421 has biased composition (polar residues); the sequence is SSVSAEESTTTPSADISETENVSSDLP. Residues 425–435 show a composition bias toward basic residues; the sequence is LRKHKISKHGP. Polar residues predominate over residues 503–513; that stretch reads PATTMENVGRQ. The region spanning 527–577 is the SANT domain; sequence TLSCWSALERDLYLKGIEIFGKNSCLIARNLLSGLKTCIEVANYMYNNGAA. The CXC domain maps to 627 to 731; it reads AGHPTVRKRT…SLGEPLARGD (105 aa). An SET domain is found at 746 to 861; it reads QRILLGRSDV…ASEELFYDYR (116 aa). The segment at 867–894 is disordered; sequence APAWARRPEGSKKDEASVSHRRAHKVAR. Positions 872 to 884 are enriched in basic and acidic residues; sequence RRPEGSKKDEASV. The span at 885 to 894 shows a compositional bias: basic residues; sequence SHRRAHKVAR.

Belongs to the class V-like SAM-binding methyltransferase superfamily. Histone-lysine methyltransferase family. EZ subfamily.

It is found in the nucleus. It carries out the reaction L-lysyl(27)-[histone H3] + 3 S-adenosyl-L-methionine = N(6),N(6),N(6)-trimethyl-L-lysyl(27)-[histone H3] + 3 S-adenosyl-L-homocysteine + 3 H(+). In terms of biological role, polycomb group (PcG) protein. Catalytic subunit of some PcG multiprotein complex, which methylates 'Lys-27' of histone H3, leading to transcriptional repression of the affected target genes. PcG proteins are not required to initiate repression, but to maintain it during later stages of development. This chain is Histone-lysine N-methyltransferase EZ2 (EZ2), found in Zea mays (Maize).